The primary structure comprises 478 residues: Argininosuccinate lyase (478 aa).

This sequence belongs to the lyase 1 family. Argininosuccinate lyase subfamily.

Its subcellular location is the cytoplasm. The enzyme catalyses 2-(N(omega)-L-arginino)succinate = fumarate + L-arginine. Its pathway is amino-acid biosynthesis; L-arginine biosynthesis; L-arginine from L-ornithine and carbamoyl phosphate: step 3/3. This Rhodospirillum rubrum (strain ATCC 11170 / ATH 1.1.1 / DSM 467 / LMG 4362 / NCIMB 8255 / S1) protein is Argininosuccinate lyase.